Consider the following 260-residue polypeptide: Acetylglutamate kinase (260 aa).

Substrate is bound by residues 46–47, Arg-68, and Asn-160; that span reads GG.

The protein belongs to the acetylglutamate kinase family. ArgB subfamily.

The protein localises to the cytoplasm. The catalysed reaction is N-acetyl-L-glutamate + ATP = N-acetyl-L-glutamyl 5-phosphate + ADP. It participates in amino-acid biosynthesis; L-arginine biosynthesis; N(2)-acetyl-L-ornithine from L-glutamate: step 2/4. In terms of biological role, catalyzes the ATP-dependent phosphorylation of N-acetyl-L-glutamate. This is Acetylglutamate kinase from Shewanella sp. (strain MR-7).